The primary structure comprises 309 residues: NADH-cytochrome b5 reductase 2 (309 aa).

A helical transmembrane segment spans residues 3–23 (ILTAPVLIGVSIVVITVLYLF). Residues 48–160 (SVKYPLPLIE…RGPNGLLVYN (113 aa)) form the FAD-binding FR-type domain. Residues 140–170 (DNMK…IRPD) and 179–214 (KFKH…VCSL) contribute to the FAD site.

Belongs to the flavoprotein pyridine nucleotide cytochrome reductase family. FAD is required as a cofactor.

It is found in the membrane. It carries out the reaction 2 Fe(III)-[cytochrome b5] + NADH = 2 Fe(II)-[cytochrome b5] + NAD(+) + H(+). In terms of biological role, NADH-cytochrome b5 reductases are involved in desaturation and elongation of fatty acids, cholesterol biosynthesis and drug metabolism. The polypeptide is NADH-cytochrome b5 reductase 2 (cyb5r2) (Danio rerio (Zebrafish)).